A 92-amino-acid polypeptide reads, in one-letter code: PqqA binding protein (92 aa).

The protein belongs to the PqqD family. Monomer. Interacts with PqqE.

The protein operates within cofactor biosynthesis; pyrroloquinoline quinone biosynthesis. Its function is as follows. Functions as a PqqA binding protein and presents PqqA to PqqE, in the pyrroloquinoline quinone (PQQ) biosynthetic pathway. This is PqqA binding protein from Xanthomonas campestris pv. campestris (strain B100).